Here is a 145-residue protein sequence, read N- to C-terminus: MEGNLLVIDKRVLPEVFEKVINAKRLLKEGKVKEITEAAKQAGISRSVYYKYKDYIFEFAETLQGRKVIFNMVVTHEKGVLSSVLNILSDVGGNILTIDQGLPIHGLAHVSFTIDISTMKCDIKEMLNEIELVHGVEKVEFVAME.

An ACT domain is found at 69-144 (IFNMVVTHEK…GVEKVEFVAM (76 aa)).

This sequence belongs to the UPF0735 family.

The sequence is that of UPF0735 ACT domain-containing protein CPE1414 from Clostridium perfringens (strain 13 / Type A).